The chain runs to 224 residues: Ribose-5-phosphate isomerase A (224 aa).

Residues 32 to 35 (TGST), 85 to 88 (DGAD), and 98 to 101 (KGGG) contribute to the substrate site. Catalysis depends on Glu107, which acts as the Proton acceptor. Lys125 lines the substrate pocket.

Belongs to the ribose 5-phosphate isomerase family. Homodimer.

It catalyses the reaction aldehydo-D-ribose 5-phosphate = D-ribulose 5-phosphate. It functions in the pathway carbohydrate degradation; pentose phosphate pathway; D-ribose 5-phosphate from D-ribulose 5-phosphate (non-oxidative stage): step 1/1. Functionally, catalyzes the reversible conversion of ribose-5-phosphate to ribulose 5-phosphate. This Pseudomonas putida (strain ATCC 700007 / DSM 6899 / JCM 31910 / BCRC 17059 / LMG 24140 / F1) protein is Ribose-5-phosphate isomerase A.